Here is a 334-residue protein sequence, read N- to C-terminus: Serine/threonine-protein kinase SAPK3 (334 aa).

The Protein kinase domain occupies 5-261 (YEALKELGAG…IPEIKKHTWF (257 aa)). Residues 11-19 (LGAGNFGVA) and Lys34 each bind ATP. Asp124 acts as the Proton acceptor in catalysis.

Belongs to the protein kinase superfamily. Ser/Thr protein kinase family. Autophosphorylated in presence of Ca(2+). Expressed in leaves and maturing seeds, but not in roots and stems of field-grown plants.

It localises to the cytoplasm. It is found in the nucleus. The catalysed reaction is L-seryl-[protein] + ATP = O-phospho-L-seryl-[protein] + ADP + H(+). It carries out the reaction L-threonyl-[protein] + ATP = O-phospho-L-threonyl-[protein] + ADP + H(+). Activated by phosphorylation. Its function is as follows. May play a role in signal transduction of hyperosmotic response. The polypeptide is Serine/threonine-protein kinase SAPK3 (SAPK3) (Oryza sativa subsp. indica (Rice)).